We begin with the raw amino-acid sequence, 1312 residues long: Multidrug resistance protein 3 (1312 aa).

A helical membrane pass occupies residues 51 to 71; it reads GFIDYILLIGGIIGAMAAGVL. Residues 59 to 369 enclose the ABC transmembrane type-1 1 domain; the sequence is IGGIIGAMAA…VAMPINALST (311 aa). A glycan (N-linked (GlcNAc...) asparagine) is linked at asparagine 98. 5 consecutive transmembrane segments (helical) span residues 127–147, 197–217, 224–244, 302–322, and 344–364; these read IYFA…FFVL, KFGV…IGFS, LVIM…GFFA, VVGV…ALGS, and MVVF…AMPI. The ABC transporter 1 domain occupies 404-643; that stretch reads IKLEDVQFRY…KATYYGLVKR (240 aa). Residue 439 to 446 coordinates ATP; sequence GASGCGKS. In terms of domain architecture, ABC transmembrane type-1 2 spans 724–1033; it reads LLSFLGLIGG…LGQMIPDVGK (310 aa). 2 helical membrane passes run 725–745 and 776–796; these read LSFL…FYMI and IWIL…LGLF. The N-linked (GlcNAc...) asparagine glycan is linked to asparagine 819. The next 3 membrane-spanning stretches (helical) occupy residues 852-872, 874-894, and 958-978; these read VGNV…AFYY, WKVA…VFLN, and AFVS…SFYI. One can recognise an ABC transporter 2 domain in the interval 1068–1307; it reads IEFKDICFRY…KGFYYTLAMQ (240 aa). ATP is bound at residue 1103 to 1110; the sequence is GASGCGKS.

The protein belongs to the ABC transporter superfamily. ABCB family. Multidrug resistance exporter (TC 3.A.1.201) subfamily.

It is found in the membrane. It catalyses the reaction ATP + H2O + xenobioticSide 1 = ADP + phosphate + xenobioticSide 2.. Its function is as follows. Energy-dependent efflux pump responsible for decreased drug accumulation in multidrug resistance parasites. The chain is Multidrug resistance protein 3 from Entamoeba histolytica (strain ATCC 30459 / HM-1:IMSS / ABRM).